Consider the following 255-residue polypeptide: Electron transfer flavoprotein subunit beta (255 aa).

Ala2 is subject to N-acetylalanine. AMP contacts are provided by residues Ala9, 39–42 (NPFC), Cys66, and 123–134 (GKQAIDDDCNQT). Residues 183-205 (ADLRLNEPRYATLPNIMKAKKKK) form a recognition loop region. Lys200 carries the N6,N6,N6-trimethyllysine; by ETFBKMT; alternate modification. Lys200 is subject to N6-acetyllysine; alternate. The residue at position 200 (Lys200) is an N6-methyllysine; alternate. At Lys203 the chain carries N6,N6,N6-trimethyllysine; by ETFBKMT. Lys210 bears the N6-acetyllysine; alternate mark. Lys210 carries the N6-succinyllysine; alternate modification. Residues Ser223 and Ser226 each carry the phosphoserine modification. Position 238 is an N6-acetyllysine (Lys238). N6-acetyllysine; alternate is present on Lys248. Position 248 is an N6-succinyllysine; alternate (Lys248).

Belongs to the ETF beta-subunit/FixA family. In terms of assembly, heterodimer composed of ETFA and ETFB. Identified in a complex that contains ETFA, ETFB and ETFRF1. Interacts with ACADM. In terms of processing, methylated. Trimethylation at Lys-200 and Lys-203 may negatively regulate the activity in electron transfer from acyl-CoA dehydrogenases.

It is found in the mitochondrion matrix. Its function is as follows. Heterodimeric electron transfer flavoprotein that accepts electrons from several mitochondrial dehydrogenases, including acyl-CoA dehydrogenases, glutaryl-CoA and sarcosine dehydrogenase. It transfers the electrons to the main mitochondrial respiratory chain via ETF-ubiquinone oxidoreductase. Required for normal mitochondrial fatty acid oxidation and normal amino acid metabolism. ETFB binds an AMP molecule that probably has a purely structural role. This chain is Electron transfer flavoprotein subunit beta, found in Pongo abelii (Sumatran orangutan).